Here is a 181-residue protein sequence, read N- to C-terminus: Acireductone dioxygenase (181 aa).

The Fe(2+) site is built by H97, H99, E103, and H141. Ni(2+) is bound by residues H97, H99, E103, and H141.

This sequence belongs to the acireductone dioxygenase (ARD) family. Monomer. Requires Fe(2+) as cofactor. Ni(2+) is required as a cofactor.

The enzyme catalyses 1,2-dihydroxy-5-(methylsulfanyl)pent-1-en-3-one + O2 = 3-(methylsulfanyl)propanoate + CO + formate + 2 H(+). It catalyses the reaction 1,2-dihydroxy-5-(methylsulfanyl)pent-1-en-3-one + O2 = 4-methylsulfanyl-2-oxobutanoate + formate + 2 H(+). It participates in amino-acid biosynthesis; L-methionine biosynthesis via salvage pathway; L-methionine from S-methyl-5-thio-alpha-D-ribose 1-phosphate: step 5/6. Catalyzes 2 different reactions between oxygen and the acireductone 1,2-dihydroxy-3-keto-5-methylthiopentene (DHK-MTPene) depending upon the metal bound in the active site. Fe-containing acireductone dioxygenase (Fe-ARD) produces formate and 2-keto-4-methylthiobutyrate (KMTB), the alpha-ketoacid precursor of methionine in the methionine recycle pathway. Ni-containing acireductone dioxygenase (Ni-ARD) produces methylthiopropionate, carbon monoxide and formate, and does not lie on the methionine recycle pathway. The chain is Acireductone dioxygenase from Pseudomonas fluorescens (strain Pf0-1).